The sequence spans 289 residues: Protein charybde (289 aa).

Residues 119–142 (TAHHPGHGHGPGPSPMPASPLQST) form a disordered region.

It belongs to the DDIT4 family.

Its subcellular location is the cytoplasm. Its function is as follows. Inhibits cell growth by regulating the Tor pathway upstream of the Tsc1-Tsc2 complex and downstream of Akt1. Acts as a cell death activator during head development. In Drosophila pseudoobscura pseudoobscura (Fruit fly), this protein is Protein charybde (chrb).